The chain runs to 124 residues: Small ribosomal subunit protein uS12 (124 aa).

A disordered region spans residues 1 to 25 (MATINQLVRKPRQASTYKSASPALD).

This sequence belongs to the universal ribosomal protein uS12 family. In terms of assembly, part of the 30S ribosomal subunit. Contacts proteins S8 and S17. May interact with IF1 in the 30S initiation complex.

Its function is as follows. With S4 and S5 plays an important role in translational accuracy. Interacts with and stabilizes bases of the 16S rRNA that are involved in tRNA selection in the A site and with the mRNA backbone. Located at the interface of the 30S and 50S subunits, it traverses the body of the 30S subunit contacting proteins on the other side and probably holding the rRNA structure together. The combined cluster of proteins S8, S12 and S17 appears to hold together the shoulder and platform of the 30S subunit. This Xylella fastidiosa (strain 9a5c) protein is Small ribosomal subunit protein uS12.